A 305-amino-acid polypeptide reads, in one-letter code: Coiled-coil domain-containing protein 50 (305 aa).

N-acetylalanine is present on A2. S5 is modified (phosphoserine). Positions 86–130 (EIAQEIQEKLTIEAERRRIQEKKDEDIARLLQEKELQEEKRRKKH) form a coiled coil. Disordered stretches follow at residues 122–142 (QEEKRRKKHTPEFSGGSVFGD) and 218–305 (KKAK…HNKQ). 2 stretches are compositionally biased toward basic and acidic residues: residues 218-239 (KKAKEREKSSLDKRKHDPECKL) and 247-263 (KSKEGDEAHRSKIDRPS). Positions 279-305 (THFTNQHSTTWHLPKSESSQKGFHNKQ) are enriched in polar residues.

In terms of assembly, interacts with RNF126. Post-translationally, phosphorylated on tyrosine residues. In terms of tissue distribution, widely expressed.

Its subcellular location is the cytoplasm. Involved in EGFR signaling. The chain is Coiled-coil domain-containing protein 50 (Ccdc50) from Mus musculus (Mouse).